The chain runs to 429 residues: Histidine--tRNA ligase (429 aa).

Belongs to the class-II aminoacyl-tRNA synthetase family. In terms of assembly, homodimer.

It localises to the cytoplasm. The catalysed reaction is tRNA(His) + L-histidine + ATP = L-histidyl-tRNA(His) + AMP + diphosphate + H(+). This Pseudomonas paraeruginosa (strain DSM 24068 / PA7) (Pseudomonas aeruginosa (strain PA7)) protein is Histidine--tRNA ligase.